Reading from the N-terminus, the 277-residue chain is Mitochondrial outer membrane protein porin 5 (277 aa).

Belongs to the eukaryotic mitochondrial porin (TC 1.B.8.1) family.

The protein localises to the mitochondrion outer membrane. Its function is as follows. Forms a channel through the mitochondrial outer membrane that allows diffusion of small hydrophilic molecules. The channel adopts an open conformation at low or zero membrane potential and a closed conformation at potentials above 30-40 mV. The open state has a weak anion selectivity whereas the closed state is cation-selective. This Oryza sativa subsp. japonica (Rice) protein is Mitochondrial outer membrane protein porin 5 (VDAC5).